A 92-amino-acid chain; its full sequence is RQC P-site tRNA stabilizing factor (92 aa).

In terms of domain architecture, S4 RNA-binding spans 5–65; the sequence is MRLDKYLKVS…GPKIVTAKIE (61 aa).

This sequence belongs to the RqcP family. In terms of assembly, associates with stalled 50S ribosomal subunits. Binds to RqcH, 23S rRNA and the P-site tRNA. Does not require RqcH for association with 50S subunits.

Its function is as follows. Key component of the ribosome quality control system (RQC), a ribosome-associated complex that mediates the extraction of incompletely synthesized nascent chains from stalled ribosomes and their subsequent degradation. RqcH recruits Ala-charged tRNA, and with RqcP directs the elongation of stalled nascent chains on 50S ribosomal subunits, leading to non-templated C-terminal alanine extensions (Ala tail). The Ala tail promotes nascent chain degradation. RqcP is associated with the translocation-like movement of the peptidyl-tRNA from the A-site into the P-site. The polypeptide is RQC P-site tRNA stabilizing factor (Listeria monocytogenes serovar 1/2a (strain ATCC BAA-679 / EGD-e)).